The primary structure comprises 329 residues: Holliday junction branch migration complex subunit RuvB (329 aa).

Residues 1-180 (MKNILQSTEC…FGIPIHLEFY (180 aa)) are large ATPase domain (RuvB-L). ATP-binding positions include isoleucine 19, arginine 20, glycine 61, lysine 64, threonine 65, threonine 66, 127–129 (EDF), arginine 170, tyrosine 180, and arginine 217. Mg(2+) is bound at residue threonine 65. A small ATPAse domain (RuvB-S) region spans residues 181–252 (STEELIKVIQ…FADKALLRLG (72 aa)). The tract at residues 255–329 (KLGLDRQDIQ…ISYLKEQSYI (75 aa)) is head domain (RuvB-H). The DNA site is built by arginine 308 and arginine 313.

This sequence belongs to the RuvB family. Homohexamer. Forms an RuvA(8)-RuvB(12)-Holliday junction (HJ) complex. HJ DNA is sandwiched between 2 RuvA tetramers; dsDNA enters through RuvA and exits via RuvB. An RuvB hexamer assembles on each DNA strand where it exits the tetramer. Each RuvB hexamer is contacted by two RuvA subunits (via domain III) on 2 adjacent RuvB subunits; this complex drives branch migration. In the full resolvosome a probable DNA-RuvA(4)-RuvB(12)-RuvC(2) complex forms which resolves the HJ.

It localises to the cytoplasm. It carries out the reaction ATP + H2O = ADP + phosphate + H(+). The RuvA-RuvB-RuvC complex processes Holliday junction (HJ) DNA during genetic recombination and DNA repair, while the RuvA-RuvB complex plays an important role in the rescue of blocked DNA replication forks via replication fork reversal (RFR). RuvA specifically binds to HJ cruciform DNA, conferring on it an open structure. The RuvB hexamer acts as an ATP-dependent pump, pulling dsDNA into and through the RuvAB complex. RuvB forms 2 homohexamers on either side of HJ DNA bound by 1 or 2 RuvA tetramers; 4 subunits per hexamer contact DNA at a time. Coordinated motions by a converter formed by DNA-disengaged RuvB subunits stimulates ATP hydrolysis and nucleotide exchange. Immobilization of the converter enables RuvB to convert the ATP-contained energy into a lever motion, pulling 2 nucleotides of DNA out of the RuvA tetramer per ATP hydrolyzed, thus driving DNA branch migration. The RuvB motors rotate together with the DNA substrate, which together with the progressing nucleotide cycle form the mechanistic basis for DNA recombination by continuous HJ branch migration. Branch migration allows RuvC to scan DNA until it finds its consensus sequence, where it cleaves and resolves cruciform DNA. The polypeptide is Holliday junction branch migration complex subunit RuvB (Ehrlichia canis (strain Jake)).